The chain runs to 489 residues: Protein translocase subunit SecY (489 aa).

Residues 1 to 20 (MGWKDAAEPVLSRMPAVARP) are Cytoplasmic-facing. Residues 21-47 (EGHVPFRRKLGWTGGILVLYFFLTNVT) traverse the membrane as a helical segment. At 48–59 (LFGLDAATANDL) the chain is on the extracellular side. The helical intramembrane region spans 60 to 67 (FGQFRSIL). The chain crosses the membrane as a discontinuously helical span at residues 60–88 (FGQFRSILAGQQGSVLQLGIGPIVTASIV). Residues 68–79 (AGQQGSVLQLGI) lie within the membrane without spanning it. The helical intramembrane region spans 80–88 (GPIVTASIV). Residues 89 to 110 (LQLLGGADLLGLDTDNNPRDQV) are Cytoplasmic-facing. A helical membrane pass occupies residues 111–135 (LYQGLQKLLVGVMICLTGLPMVFAG). At 136-153 (NFLPADQAVATSLGIGTV) the chain is on the extracellular side. The helical transmembrane segment at 154 to 178 (GVKGLIFAQIAVGGVLILFMDEIVS) threads the bilayer. Residues 179–184 (KWGVGS) are Cytoplasmic-facing. A helical transmembrane segment spans residues 185–203 (GVGLFIIAGVSQQLVGGLF). At 204 to 244 (SWQGLGGTSGFFATWIGIITGAIELPASPTDLLSTVFLGQG) the chain is on the extracellular side. Residues 245 to 266 (QLLALITTLLIFGIVVYAESVR) traverse the membrane as a helical segment. The Cytoplasmic portion of the chain corresponds to 267-291 (VEIPLSHARVKGARGRFPVKLIYAS). The chain crosses the membrane as a helical span at residues 292 to 313 (VLPMILVRALQANIQFLGRFLN). Over 314–364 (SSWVGMPAWLGQYTSGQVTGGLLYYLAPIQSRSDWMWFLGLTSADPLDIAI) the chain is Extracellular. The chain crosses the membrane as a helical span at residues 365–384 (RVLIDLIFMIVGGAVFAIFW). Residues 385 to 427 (VETTGMGPKSTAQQIQNSGMQIPGFRRNPQVIERVMERYIPQV) are Cytoplasmic-facing. A helical transmembrane segment spans residues 428–446 (TVIGGALVGLLAVMANMLG). At 447–450 (TIGA) the chain is on the extracellular side. A helical membrane pass occupies residues 451–465 (VSGTGLLLTVSITYK). The Cytoplasmic segment spans residues 466–488 (LYEEIAEEQLMEMHPMMRNMFGS).

The protein belongs to the SecY/SEC61-alpha family. As to quaternary structure, component of the Sec protein translocase complex. Heterotrimer consisting of alpha (SecY), beta (SecG) and gamma (SecE) subunits. The heterotrimers can form oligomers, although 1 heterotrimer is thought to be able to translocate proteins. Interacts with the ribosome. May interact with SecDF, and other proteins may be involved.

The protein resides in the cell membrane. Its function is as follows. The central subunit of the protein translocation channel SecYEG. Consists of two halves formed by TMs 1-5 and 6-10. These two domains form a lateral gate at the front which open onto the bilayer between TMs 2 and 7, and are clamped together by SecE at the back. The channel is closed by both a pore ring composed of hydrophobic SecY resides and a short helix (helix 2A) on the extracellular side of the membrane which forms a plug. The plug probably moves laterally to allow the channel to open. The ring and the pore may move independently. This is Protein translocase subunit SecY from Haloferax volcanii (strain ATCC 29605 / DSM 3757 / JCM 8879 / NBRC 14742 / NCIMB 2012 / VKM B-1768 / DS2) (Halobacterium volcanii).